The following is a 302-amino-acid chain: 4-hydroxy-tetrahydrodipicolinate synthase (302 aa).

Thr57 lines the pyruvate pocket. Tyr145 (proton donor/acceptor) is an active-site residue. Lys173 serves as the catalytic Schiff-base intermediate with substrate. Ile213 lines the pyruvate pocket.

The protein belongs to the DapA family. As to quaternary structure, homotetramer; dimer of dimers.

Its subcellular location is the cytoplasm. The enzyme catalyses L-aspartate 4-semialdehyde + pyruvate = (2S,4S)-4-hydroxy-2,3,4,5-tetrahydrodipicolinate + H2O + H(+). Its pathway is amino-acid biosynthesis; L-lysine biosynthesis via DAP pathway; (S)-tetrahydrodipicolinate from L-aspartate: step 3/4. Catalyzes the condensation of (S)-aspartate-beta-semialdehyde [(S)-ASA] and pyruvate to 4-hydroxy-tetrahydrodipicolinate (HTPA). In Mycolicibacterium gilvum (strain PYR-GCK) (Mycobacterium gilvum (strain PYR-GCK)), this protein is 4-hydroxy-tetrahydrodipicolinate synthase.